The primary structure comprises 152 residues: Aspartate carbamoyltransferase regulatory chain (152 aa).

Positions 107, 112, 136, and 139 each coordinate Zn(2+).

Belongs to the PyrI family. As to quaternary structure, contains catalytic and regulatory chains. Requires Zn(2+) as cofactor.

Functionally, involved in allosteric regulation of aspartate carbamoyltransferase. This is Aspartate carbamoyltransferase regulatory chain from Chromobacterium violaceum (strain ATCC 12472 / DSM 30191 / JCM 1249 / CCUG 213 / NBRC 12614 / NCIMB 9131 / NCTC 9757 / MK).